A 312-amino-acid chain; its full sequence is NAD(P)(+)--arginine ADP-ribosyltransferase 1 (312 aa).

Residues 1–20 (MELLALRWVLLAGTLLSTSA) form the signal peptide. Residues 21–31 (ASSALQEGDLG) constitute a propeptide that is removed on maturation. Cystine bridges form between Cys51/Cys260 and Cys159/Cys208. The region spanning 71 to 256 (IAYAVTWRQA…IQLHSKGKMS (186 aa)) is the TR mART core domain. The NAD(+) site is built by Tyr108, Arg164, and Gln183. Arg164 is an active-site residue. Ser186 is a catalytic residue. Ser217 serves as a coordination point for NAD(+). Residue Glu224 is part of the active site. Residues 267 to 312 (GGQWGRGHQEVGLGLSPGLSLPVLPCRRRVWEGLGHREGDPIPAAV) constitute a propeptide that is removed on maturation.

This sequence belongs to the Arg-specific ADP-ribosyltransferase family.

The protein localises to the secreted. It localises to the extracellular space. It catalyses the reaction L-arginyl-[protein] + NAD(+) = N(omega)-(ADP-D-ribosyl)-L-arginyl-[protein] + nicotinamide + H(+). The chain is NAD(P)(+)--arginine ADP-ribosyltransferase 1 from Gallus gallus (Chicken).